The primary structure comprises 386 residues: Succinate--CoA ligase [ADP-forming] subunit beta (386 aa).

ATP contacts are provided by lysine 46, glutamate 99, alanine 102, and glutamate 107. Residues asparagine 199 and aspartate 213 each contribute to the Mg(2+) site. Substrate contacts are provided by residues asparagine 264 and 321 to 323 (GIM).

The protein belongs to the succinate/malate CoA ligase beta subunit family. Heterotetramer of two alpha and two beta subunits. Mg(2+) is required as a cofactor.

The enzyme catalyses succinate + ATP + CoA = succinyl-CoA + ADP + phosphate. It catalyses the reaction GTP + succinate + CoA = succinyl-CoA + GDP + phosphate. It functions in the pathway carbohydrate metabolism; tricarboxylic acid cycle; succinate from succinyl-CoA (ligase route): step 1/1. In terms of biological role, succinyl-CoA synthetase functions in the citric acid cycle (TCA), coupling the hydrolysis of succinyl-CoA to the synthesis of either ATP or GTP and thus represents the only step of substrate-level phosphorylation in the TCA. The beta subunit provides nucleotide specificity of the enzyme and binds the substrate succinate, while the binding sites for coenzyme A and phosphate are found in the alpha subunit. This Orientia tsutsugamushi (strain Ikeda) (Rickettsia tsutsugamushi) protein is Succinate--CoA ligase [ADP-forming] subunit beta.